Consider the following 389-residue polypeptide: Transcription factor TGAL10 (389 aa).

Positions 80-110 are disordered; that stretch reads DDQDNAAALQESPRHASDSFEQEASKPRDKI. The span at 91-110 shows a compositional bias: basic and acidic residues; it reads SPRHASDSFEQEASKPRDKI. The region spanning 107–151 is the bZIP domain; it reads RDKIQRRLAQNREAARKSRLRKKAYIQNLETSRMKLAHLEQEITR. Positions 109–129 are basic motif; it reads KIQRRLAQNREAARKSRLRKK. The interval 135 to 149 is leucine-zipper; the sequence is LETSRMKLAHLEQEI. One can recognise a DOG1 domain in the interval 176–389; sequence VVTFEVEYAQ…LHVRRRAELG (214 aa). 2 disordered regions span residues 320–345 and 370–389; these read TSCD…GDGG and HRRS…AELG. Basic residues predominate over residues 380–389; sequence LHVRRRAELG.

The protein belongs to the bZIP family.

Its subcellular location is the nucleus. In terms of biological role, transcriptional regulator involved in defense response. The protein is Transcription factor TGAL10 of Oryza sativa subsp. japonica (Rice).